Here is a 209-residue protein sequence, read N- to C-terminus: Large ribosomal subunit protein bL9 (209 aa).

Residues Glu181–Ala209 form a disordered region. Residues Glu197–Ala209 are compositionally biased toward acidic residues.

This sequence belongs to the bacterial ribosomal protein bL9 family.

Its function is as follows. Binds to the 23S rRNA. This Maricaulis maris (strain MCS10) (Caulobacter maris) protein is Large ribosomal subunit protein bL9.